Reading from the N-terminus, the 544-residue chain is MTQYIFITGGVVSSLGKGISAASLGAILEARGLRITMIKLDPYINVDPGTMSPFQHGEVFVTHDGAETDLDLGHYERFVNMRATQFHNCTAGRVYLEVIQRERKGDYLGKTVQVIPHITDTIQQYILRAAQGADIAMVEIGGTVGDIESLPFMEAIRQLGTKLGRRDTMFIHLTLVPFISAAGELKTKPTQHSVKELRSIGIQPDMLICRADREIPEDEKAKISLFTNVPAKAVISGLSVKNIYEIPMLYQKQGVDDLVVKHFGLHVKEANLGDWEKVVDAINHPEHEVTVAMVGKYVNLTDAYKSLNEALYHAGIKNKTKVNIRYVDSEDLYSQGTELLAGVDAIVVPGGFGNRGVNGKLRAVQYAREENIPYLGICLGLQIAVVEFARNVLGIKNACSTEWDEKTDEPIIALVAQWVNERGEVEQRDKKMDLGGTLRLGALPAKLKAGSKIATIYGSEIMNERHRHRYEVNANYEKRLEAAGMRISGRSADNDLVEVIEIPSHRWFIGLQSHPEFTSTPLGGHPLFSAFIAAALDYQTERLS.

Residues 1–265 (MTQYIFITGG…DDLVVKHFGL (265 aa)) are amidoligase domain. CTP is bound at residue serine 13. Serine 13 contacts UTP. Residues 14 to 19 (SLGKGI) and aspartate 71 contribute to the ATP site. Positions 71 and 139 each coordinate Mg(2+). CTP is bound by residues 146 to 148 (DIE), 186 to 191 (KTKPTQ), and lysine 222. UTP is bound by residues 186 to 191 (KTKPTQ) and lysine 222. Residues 290 to 541 (TVAMVGKYVN…IAAALDYQTE (252 aa)) enclose the Glutamine amidotransferase type-1 domain. Position 351 (glycine 351) interacts with L-glutamine. The active-site Nucleophile; for glutamine hydrolysis is the cysteine 378. L-glutamine contacts are provided by residues 379–382 (LGLQ), glutamate 402, and arginine 469. Catalysis depends on residues histidine 514 and glutamate 516.

The protein belongs to the CTP synthase family. Homotetramer.

It catalyses the reaction UTP + L-glutamine + ATP + H2O = CTP + L-glutamate + ADP + phosphate + 2 H(+). It carries out the reaction L-glutamine + H2O = L-glutamate + NH4(+). The enzyme catalyses UTP + NH4(+) + ATP = CTP + ADP + phosphate + 2 H(+). It participates in pyrimidine metabolism; CTP biosynthesis via de novo pathway; CTP from UDP: step 2/2. With respect to regulation, allosterically activated by GTP, when glutamine is the substrate; GTP has no effect on the reaction when ammonia is the substrate. The allosteric effector GTP functions by stabilizing the protein conformation that binds the tetrahedral intermediate(s) formed during glutamine hydrolysis. Inhibited by the product CTP, via allosteric rather than competitive inhibition. Its function is as follows. Catalyzes the ATP-dependent amination of UTP to CTP with either L-glutamine or ammonia as the source of nitrogen. Regulates intracellular CTP levels through interactions with the four ribonucleotide triphosphates. The chain is CTP synthase from Dichelobacter nodosus (strain VCS1703A).